Reading from the N-terminus, the 1215-residue chain is DNA-directed RNA polymerase subunit beta' (1215 aa).

Zn(2+) is bound by residues Cys-60, Cys-62, Cys-75, and Cys-78. Mg(2+) contacts are provided by Asp-449, Asp-451, and Asp-453. 4 residues coordinate Zn(2+): Cys-818, Cys-892, Cys-899, and Cys-902.

It belongs to the RNA polymerase beta' chain family. In terms of assembly, the RNAP catalytic core consists of 2 alpha, 1 beta, 1 beta' and 1 omega subunit. When a sigma factor is associated with the core the holoenzyme is formed, which can initiate transcription. Mg(2+) is required as a cofactor. Requires Zn(2+) as cofactor.

The catalysed reaction is RNA(n) + a ribonucleoside 5'-triphosphate = RNA(n+1) + diphosphate. Functionally, DNA-dependent RNA polymerase catalyzes the transcription of DNA into RNA using the four ribonucleoside triphosphates as substrates. In Limosilactobacillus fermentum (strain NBRC 3956 / LMG 18251) (Lactobacillus fermentum), this protein is DNA-directed RNA polymerase subunit beta'.